We begin with the raw amino-acid sequence, 338 residues long: E3 ubiquitin-protein ligase RING1 (338 aa).

The interval 102 to 124 (TTTSSSASIDPNNPSLSGPTRSG) is disordered. A compositionally biased stretch (polar residues) spans 110–121 (IDPNNPSLSGPT). The RING-type; atypical zinc-finger motif lies at 224-265 (CAVCMDDFEEGTEAKQMPCKHLYHKDCLLPWLELHNSCPVCR). 2 stretches are compositionally biased toward basic and acidic residues: residues 267–279 (ELPTDDPDYERRV) and 298–309 (SDGDNRTVERSF). The tract at residues 267 to 338 (ELPTDDPDYE…NAETRQEDLD (72 aa)) is disordered.

Auto-ubiquitinated as part of the enzymatic reaction. In terms of tissue distribution, mostly expressed in cotton fibers, and, to a lower extent, in leaves and flowers.

It catalyses the reaction S-ubiquitinyl-[E2 ubiquitin-conjugating enzyme]-L-cysteine + [acceptor protein]-L-lysine = [E2 ubiquitin-conjugating enzyme]-L-cysteine + N(6)-ubiquitinyl-[acceptor protein]-L-lysine.. Its pathway is protein modification; protein ubiquitination. E3 ubiquitin-protein ligase which accepts ubiquitin from an E2 ubiquitin-conjugating enzyme in the form of a thioester and then directly transfers the ubiquitin to targeted substrates. Promotes polyubiquitination of target proteins. This chain is E3 ubiquitin-protein ligase RING1 (RING1), found in Gossypium hirsutum (Upland cotton).